A 184-amino-acid chain; its full sequence is MKTAQEIRVGNVIMYGKDPMVVLRTEYSRGGRNSSTVRMKLKSLIANFNTEVVYKADDKLEQVILDKKECTYSYFAEPMYICMDTEYNQYEVEAENMGDSLNYLEDGMELEVVFYNEKAISVEMPTNVVREITWTEPAVKGDTSGKVLKPAKISTGFDVGVPIFVAQGDKVEIDTRTGEYRKRV.

Belongs to the elongation factor P family.

The protein localises to the cytoplasm. Its pathway is protein biosynthesis; polypeptide chain elongation. In terms of biological role, involved in peptide bond synthesis. Stimulates efficient translation and peptide-bond synthesis on native or reconstituted 70S ribosomes in vitro. Probably functions indirectly by altering the affinity of the ribosome for aminoacyl-tRNA, thus increasing their reactivity as acceptors for peptidyl transferase. The polypeptide is Elongation factor P (Albidiferax ferrireducens (strain ATCC BAA-621 / DSM 15236 / T118) (Rhodoferax ferrireducens)).